Reading from the N-terminus, the 206-residue chain is Imidazole glycerol phosphate synthase subunit hisH (206 aa).

The Glutamine amidotransferase type-1 domain maps to K2 to L206. C80 serves as the catalytic Nucleophile. Catalysis depends on residues H184 and E186.

In terms of assembly, heterodimer of hisH and hisF.

It is found in the plastid. It localises to the chloroplast. It carries out the reaction 5-[(5-phospho-1-deoxy-D-ribulos-1-ylimino)methylamino]-1-(5-phospho-beta-D-ribosyl)imidazole-4-carboxamide + L-glutamine = D-erythro-1-(imidazol-4-yl)glycerol 3-phosphate + 5-amino-1-(5-phospho-beta-D-ribosyl)imidazole-4-carboxamide + L-glutamate + H(+). It catalyses the reaction L-glutamine + H2O = L-glutamate + NH4(+). It participates in amino-acid biosynthesis; L-histidine biosynthesis; L-histidine from 5-phospho-alpha-D-ribose 1-diphosphate: step 5/9. IGPS catalyzes the conversion of PRFAR and glutamine to IGP, AICAR and glutamate. The HisH subunit catalyzes the hydrolysis of glutamine to glutamate and ammonia as part of the synthesis of IGP and AICAR. The resulting ammonia molecule is channeled to the active site of HisF. The chain is Imidazole glycerol phosphate synthase subunit hisH from Cyanidioschyzon merolae (strain NIES-3377 / 10D) (Unicellular red alga).